A 257-amino-acid chain; its full sequence is NH(3)-dependent NAD(+) synthetase (257 aa).

Residue 28–35 (GISGGVDS) participates in ATP binding. Mg(2+) is bound at residue aspartate 34. Residue arginine 109 participates in deamido-NAD(+) binding. Position 129 (threonine 129) interacts with ATP. Glutamate 134 serves as a coordination point for Mg(2+). Residues lysine 142 and aspartate 149 each contribute to the deamido-NAD(+) site. Residues lysine 158 and serine 180 each coordinate ATP. 240–241 (HK) contacts deamido-NAD(+).

It belongs to the NAD synthetase family. As to quaternary structure, homodimer.

The enzyme catalyses deamido-NAD(+) + NH4(+) + ATP = AMP + diphosphate + NAD(+) + H(+). It participates in cofactor biosynthesis; NAD(+) biosynthesis; NAD(+) from deamido-NAD(+) (ammonia route): step 1/1. Its function is as follows. Catalyzes the ATP-dependent amidation of deamido-NAD to form NAD. Uses ammonia as a nitrogen source. This Pyrococcus furiosus (strain ATCC 43587 / DSM 3638 / JCM 8422 / Vc1) protein is NH(3)-dependent NAD(+) synthetase.